We begin with the raw amino-acid sequence, 707 residues long: NAD(P)H-quinone oxidoreductase subunit 5, chloroplastic (707 aa).

Transmembrane regions (helical) follow at residues 9–29, 40–60, 89–109, 125–145, 147–167, 184–204, 219–239, 258–278, 280–300, 327–347, 354–374, 396–416, 425–445, 538–558, and 592–612; these read WIIP…LLLF, WAFP…DLSI, IDSL…FVLI, FAYM…SNLI, IYIF…FWFT, IGDF…GSFE, NEVH…GAVA, TPIS…FLVA, LLPL…IGII, LGYM…FHLI, ALLF…VGYS, IAFL…CFWS, WLYS…TAFY, LFPM…AIPL, and FLTN…TAFL.

Belongs to the complex I subunit 5 family. NDH is composed of at least 16 different subunits, 5 of which are encoded in the nucleus.

It is found in the plastid. The protein resides in the chloroplast thylakoid membrane. It carries out the reaction a plastoquinone + NADH + (n+1) H(+)(in) = a plastoquinol + NAD(+) + n H(+)(out). The enzyme catalyses a plastoquinone + NADPH + (n+1) H(+)(in) = a plastoquinol + NADP(+) + n H(+)(out). Functionally, NDH shuttles electrons from NAD(P)H:plastoquinone, via FMN and iron-sulfur (Fe-S) centers, to quinones in the photosynthetic chain and possibly in a chloroplast respiratory chain. The immediate electron acceptor for the enzyme in this species is believed to be plastoquinone. Couples the redox reaction to proton translocation, and thus conserves the redox energy in a proton gradient. The chain is NAD(P)H-quinone oxidoreductase subunit 5, chloroplastic (ndhF) from Malvaviscus arboreus (Turk's cap).